The chain runs to 388 residues: MATTPMTVVDHEAEEAVAKAREDDKSRQVDAFDAGKPPPFRIGDVRAAVPEHCWHKSPWRSLWYVVRDVAAVVALGTAAAAMDSWAVWPVYWAVQGTMFWAFFVLGHDCGHGSFSDSRTLNSVVGHLLHSFILIPYHGWRISHRTHHQNHGHVDRDESWHPITEGRYRRLPPRAKKIRFTAPYPLLLFPLYLFYRGPDKPGTHFLPSSELFSPKEKGDVMLSTTCWCIMLASLLAMSCAFGPLQVLKMYGLPYLVFVMWLDLVTYLHHHGHHERLPWYRGEEWSYLRGGLTTVDRDYGWINKIHHDIGTHVIHHLFPQIPHYHLVEATKAAKPVLGRYYREPQKSGPLPLPLLGVFLRSIRVNHFVSDHGDVVYYQTDHHLNDTTKQK.

The tract at residues 1–33 is disordered; it reads MATTPMTVVDHEAEEAVAKAREDDKSRQVDAFD. A compositionally biased stretch (basic and acidic residues) spans 9-30; sequence VDHEAEEAVAKAREDDKSRQVD. Helical transmembrane passes span 62-82 and 85-105; these read LWYV…AAAM and WAVW…FFVL. A Histidine box-1 motif is present at residues 107–111; it reads HDCGH. A helical transmembrane segment spans residues 119–139; that stretch reads TLNSVVGHLLHSFILIPYHGW. The short motif at 143-147 is the Histidine box-2 element; the sequence is HRTHH. The next 3 membrane-spanning stretches (helical) occupy residues 177–194, 226–246, and 248–268; these read IRFT…YLFY, WCIM…LQVL, and MYGL…YLHH. Positions 310–314 match the Histidine box-3 motif; sequence HVIHH.

Belongs to the fatty acid desaturase type 1 family. In terms of tissue distribution, highly expressed in root hair cells. Barely detected in panicle, shoot apex, stems and leaves.

The protein localises to the membrane. Its pathway is lipid metabolism; polyunsaturated fatty acid biosynthesis. This is Probable fatty acid desaturase DES1 from Sorghum bicolor (Sorghum).